The following is a 118-amino-acid chain: Protein TusC (118 aa).

Belongs to the DsrF/TusC family. As to quaternary structure, heterohexamer, formed by a dimer of trimers. The hexameric TusBCD complex contains 2 copies each of TusB, TusC and TusD. The TusBCD complex interacts with TusE.

It localises to the cytoplasm. In terms of biological role, part of a sulfur-relay system required for 2-thiolation of 5-methylaminomethyl-2-thiouridine (mnm(5)s(2)U) at tRNA wobble positions. The sequence is that of Protein TusC from Salmonella paratyphi C (strain RKS4594).